Here is a 420-residue protein sequence, read N- to C-terminus: Fasciclin-like arabinogalactan protein 4 (420 aa).

Residues 1–28 form the signal peptide; the sequence is MANVISISHFTLLALPYLLLLLSSTAAA. FAS1 domains lie at 29 to 177 and 205 to 351; these read INVT…DSLI and GINL…SKVL. Residues asparagine 30, asparagine 40, asparagine 135, asparagine 154, asparagine 167, asparagine 207, asparagine 312, and asparagine 317 are each glycosylated (N-linked (GlcNAc...) asparagine). The disordered stretch occupies residues 360 to 388; it reads SGQPVATAPPQEISLSPESSSEQPSRLVS. The segment covering 368 to 384 has biased composition (low complexity); the sequence is PPQEISLSPESSSEQPS. Serine 396 carries the GPI-anchor amidated serine lipid modification. Residues 397–420 constitute a propeptide, removed in mature form; it reads GAVKRPLGFLVLWCWCIAFCYVLV.

This sequence belongs to the fasciclin-like AGP family. As to expression, expressed in all plant organs and tissues, including guard cells in the leaf.

The protein localises to the cell membrane. May be a cell surface adhesion protein that is required for normal cell expansion. In Arabidopsis thaliana (Mouse-ear cress), this protein is Fasciclin-like arabinogalactan protein 4 (FLA4).